The primary structure comprises 138 residues: MRTLWIVAVCLIGVEGNLFQFARMINGKLGAFSVWNYISYGCYCGWGGQGTPKDATDRCCFVHDCCYGGVKGCNPKLAIYSYSFQRGNIVCGRNNGCLRTICECDRVAANCFHQNKNTYNKEYKFLSSSKCRQRSEQC.

The N-terminal stretch at 1–16 (MRTLWIVAVCLIGVEG) is a signal peptide. 7 disulfide bridges follow: C42/C131, C44/C60, C59/C111, C65/C138, C66/C104, C73/C97, and C91/C102. Y43, G45, and G47 together coordinate Ca(2+). H63 is an active-site residue. A Ca(2+)-binding site is contributed by D64. D105 is a catalytic residue.

The protein belongs to the phospholipase A2 family. Group II subfamily. D49 sub-subfamily. As to quaternary structure, heterodimer of a weakly toxic basic protein having phospholipase A2 activity (RV-4) and a non-toxic acidic protein which inhibits its enzymatic activity but potentiates its lethal potency and neurotoxicity (RV-7). Ca(2+) is required as a cofactor. In terms of tissue distribution, expressed by the venom gland.

The protein localises to the secreted. It carries out the reaction a 1,2-diacyl-sn-glycero-3-phosphocholine + H2O = a 1-acyl-sn-glycero-3-phosphocholine + a fatty acid + H(+). In terms of biological role, heterodimer RV-4/RV-7: acts as a presynaptic neurotoxin. Functionally, monomer: snake venom phospholipase A2 (PLA2) that acts as a presynaptic neurotoxin. PLA2 catalyzes the calcium-dependent hydrolysis of the 2-acyl groups in 3-sn-phosphoglycerides. The protein is Basic phospholipase A2 RV-4 of Daboia siamensis (Eastern Russel's viper).